Consider the following 363-residue polypeptide: Protein Wnt-5 (363 aa).

The N-terminal stretch at 1 to 27 (MVGMTRIQSAEPVWILFVLTLYSSVLM) is a signal peptide. N-linked (GlcNAc...) asparagine glycans are attached at residues asparagine 48 and asparagine 98. 11 disulfide bridges follow: cysteine 88–cysteine 99, cysteine 137–cysteine 145, cysteine 147–cysteine 165, cysteine 221–cysteine 235, cysteine 223–cysteine 230, cysteine 292–cysteine 323, cysteine 308–cysteine 318, cysteine 322–cysteine 362, cysteine 338–cysteine 353, cysteine 340–cysteine 350, and cysteine 345–cysteine 346. Serine 227 carries the O-palmitoleoyl serine; by PORCN lipid modification.

Belongs to the Wnt family. Post-translationally, palmitoleoylation is required for efficient binding to frizzled receptors. Depalmitoleoylation leads to Wnt signaling pathway inhibition.

The protein localises to the secreted. It is found in the extracellular space. The protein resides in the extracellular matrix. In terms of biological role, ligand for members of the frizzled family of seven transmembrane receptors. Probable developmental protein. May be a signaling molecule which affects the development of discrete regions of tissues. Is likely to signal over only few cell diameters. The sequence is that of Protein Wnt-5 (WNT5) from Halocynthia roretzi (Sea squirt).